The primary structure comprises 216 residues: Protein Syd (216 aa).

The protein belongs to the Syd family.

The protein localises to the cell inner membrane. In terms of biological role, interacts with the SecY protein in vivo. May bind preferentially to an uncomplexed state of SecY, thus functioning either as a chelating agent for excess SecY in the cell or as a regulatory factor that negatively controls the translocase function. The polypeptide is Protein Syd (Shewanella putrefaciens (strain CN-32 / ATCC BAA-453)).